Here is a 393-residue protein sequence, read N- to C-terminus: Putative mitogen-activated protein kinase kinase kinase 7-like (393 aa).

The Protein kinase domain maps to 11 to 266; that stretch reads KLSEKFLGAG…PSMKEIEKFL (256 aa). ATP is bound by residues 17–25 and Lys-38; that span reads LGAGSGGAV. Asp-133 acts as the Proton acceptor in catalysis. The segment at 339-379 is disordered; that stretch reads AAADGDREVRRAEKDTERETSRAAHNGERETRRAGQDVGRE.

This sequence belongs to the protein kinase superfamily. STE Ser/Thr protein kinase family. MAP kinase kinase kinase subfamily. Mg(2+) is required as a cofactor.

The catalysed reaction is L-seryl-[protein] + ATP = O-phospho-L-seryl-[protein] + ADP + H(+). It carries out the reaction L-threonyl-[protein] + ATP = O-phospho-L-threonyl-[protein] + ADP + H(+). The protein is Putative mitogen-activated protein kinase kinase kinase 7-like (Takl1) of Drosophila melanogaster (Fruit fly).